Consider the following 322-residue polypeptide: Beta-ketoacyl-[acyl-carrier-protein] synthase III (322 aa).

Active-site residues include Cys113 and His249. Residues Gln250–Arg254 form an ACP-binding region. The active site involves Asn279.

It belongs to the thiolase-like superfamily. FabH family. As to quaternary structure, homodimer.

It localises to the cytoplasm. The catalysed reaction is malonyl-[ACP] + acetyl-CoA + H(+) = 3-oxobutanoyl-[ACP] + CO2 + CoA. Its pathway is lipid metabolism; fatty acid biosynthesis. Functionally, catalyzes the condensation reaction of fatty acid synthesis by the addition to an acyl acceptor of two carbons from malonyl-ACP. Catalyzes the first condensation reaction which initiates fatty acid synthesis and may therefore play a role in governing the total rate of fatty acid production. Possesses both acetoacetyl-ACP synthase and acetyl transacylase activities. Its substrate specificity determines the biosynthesis of branched-chain and/or straight-chain of fatty acids. The sequence is that of Beta-ketoacyl-[acyl-carrier-protein] synthase III from Thioalkalivibrio sulfidiphilus (strain HL-EbGR7).